A 419-amino-acid chain; its full sequence is RING finger protein 150 (419 aa).

Residues 1–34 (MALSVIQACRSLALSTWLLSFCFVHLLCLDFTVA) form the signal peptide. Over 35-197 (EKEEWYTAFV…NLQKYVSRTS (163 aa)) the chain is Extracellular. One can recognise a PA domain in the interval 70–172 (SLKREARGVL…PKGRELVLLM (103 aa)). Residues 198 to 218 (VVFVSISFIILMIISLAWLVF) traverse the membrane as a helical segment. Topologically, residues 219-419 (YYIQRFRYAN…IDTPTDDPKC (201 aa)) are cytoplasmic. The RING-type; atypical zinc-finger motif lies at 267 to 308 (CAVCIEGYKPNDVVRILPCRHLFHKCCVDPWLVDHRTCPMCK). Positions 374–419 (SEPLSQDTMPTEQSELQPIASGSSDVSLTTGAGHSDIDTPTDDPKC) are disordered. Residues 376–405 (PLSQDTMPTEQSELQPIASGSSDVSLTTGA) are compositionally biased toward polar residues.

It localises to the membrane. The chain is RING finger protein 150 (rnf150) from Danio rerio (Zebrafish).